A 212-amino-acid chain; its full sequence is Photosynthetic NDH subunit of subcomplex B 5, chloroplastic (212 aa).

The N-terminal 48 residues, 1-48 (MATVTILSPKSIPKVTDSKFGARVSDQIVNVVKCGKSGRRLKLAKLVS), are a transit peptide targeting the chloroplast. The next 2 membrane-spanning stretches (helical) occupy residues 115 to 135 (FQGL…YFDA) and 136 to 156 (PGEY…IIEM).

As to quaternary structure, part of the chloroplast NDH complex, composed of a mixture of chloroplast and nucleus encoded subunits. Component of the NDH subcomplex B, at least composed of PnsB1, PnsB2, PnsB3, PnsB4 and PnsB5.

Its subcellular location is the plastid. It is found in the chloroplast membrane. Its function is as follows. NDH shuttles electrons from NAD(P)H:plastoquinone, via FMN and iron-sulfur (Fe-S) centers, to quinones in the photosynthetic chain and possibly in a chloroplast respiratory chain. The immediate electron acceptor for the enzyme in this species is believed to be plastoquinone. Couples the redox reaction to proton translocation, and thus conserves the redox energy in a proton gradient. The protein is Photosynthetic NDH subunit of subcomplex B 5, chloroplastic of Arabidopsis thaliana (Mouse-ear cress).